A 474-amino-acid chain; its full sequence is MTRINPIDLSFLLLERANRPNHMAAYTIFEKPKGQKSSFGPRLFDAYRHSQAAKPFNHKLKWLGTDVAAWETVEPDMGYHIRHLALPAPGSMQQFHETVSFLNTGLLDRGHPMWECYIIDGIERGRIAILLKVHHALIDGEGGLRAMRNFLSDSPDDTTLAGPWMSAQGADRPRRTPATVSRRAQLQGQLQGMIKGLTKLPSGLFGVSADAADLGAQALSLKARKASLPFTARRTLFNNTAKSAARAYGNVELPLADVKALAKATGTSVNDVVMTVIDDALHHYLAEHQASTDRPLVAFMPMSLREKSGEGGGNRVSAELVPMGAPKASPVERLKEINAATTRAKDKGRGMQTTSRQAYALLLLGSLTVADALPLLGKLPSANVVISNMKGPTEQLYLAGAPLVAFSGLPIVPPGAGLNVTFASINTALCIAIGAAPEAVHEPSRLAELMQRAFTELQTEAGTTSPTTSKSRTP.

Catalysis depends on His135, which acts as the Proton acceptor.

This sequence belongs to the long-chain O-acyltransferase family.

It carries out the reaction an acyl-CoA + a 1,2-diacyl-sn-glycerol = a triacyl-sn-glycerol + CoA. It functions in the pathway glycerolipid metabolism; triacylglycerol biosynthesis. Required for maintaining the appropriate mycolic acid composition and permeability of the envelope on its exposure to acidic pH. The protein is Probable diacyglycerol O-acyltransferase Tgs4 (tgs4) of Mycobacterium tuberculosis (strain CDC 1551 / Oshkosh).